The following is a 185-amino-acid chain: ATP synthase subunit b 2 (185 aa).

The disordered stretch occupies residues 1-24; it reads MADSHGNAKGATAHTEAGGGHKAP. A helical membrane pass occupies residues 34-56; sequence ASQLVSLTIAFVALYLISSRLAL.

This sequence belongs to the ATPase B chain family. F-type ATPases have 2 components, F(1) - the catalytic core - and F(0) - the membrane proton channel. F(1) has five subunits: alpha(3), beta(3), gamma(1), delta(1), epsilon(1). F(0) has three main subunits: a(1), b(2) and c(10-14). The alpha and beta chains form an alternating ring which encloses part of the gamma chain. F(1) is attached to F(0) by a central stalk formed by the gamma and epsilon chains, while a peripheral stalk is formed by the delta and b chains.

The protein localises to the cell inner membrane. Its function is as follows. F(1)F(0) ATP synthase produces ATP from ADP in the presence of a proton or sodium gradient. F-type ATPases consist of two structural domains, F(1) containing the extramembraneous catalytic core and F(0) containing the membrane proton channel, linked together by a central stalk and a peripheral stalk. During catalysis, ATP synthesis in the catalytic domain of F(1) is coupled via a rotary mechanism of the central stalk subunits to proton translocation. Component of the F(0) channel, it forms part of the peripheral stalk, linking F(1) to F(0). The b'-subunit is a diverged and duplicated form of b found in plants and photosynthetic bacteria. This is ATP synthase subunit b 2 (atpF2) from Nitrobacter hamburgensis (strain DSM 10229 / NCIMB 13809 / X14).